Reading from the N-terminus, the 63-residue chain is Hirudin-P6 (63 aa).

The interval 1–3 (MRY) is interaction with thrombin active site. 3 cysteine pairs are disulfide-bonded: cysteine 6-cysteine 14, cysteine 16-cysteine 28, and cysteine 22-cysteine 37. Basic and acidic residues predominate over residues 35 to 55 (KKCVEGEGTRKPQNEGQHDFD). The segment at 35 to 63 (KKCVEGEGTRKPQNEGQHDFDPIPEEYLS) is disordered. Threonine 43 carries an O-linked (GalNAc...) threonine glycan. The interaction with fibrinogen-binding exosite of thrombin stretch occupies residues 53–63 (DFDPIPEEYLS). Tyrosine 61 bears the Sulfotyrosine mark.

It belongs to the protease inhibitor I14 (hirudin) family. In terms of processing, O-linked glycan consists of Fuc-Gal-GalNAc trisaccharide.

It localises to the secreted. Its function is as follows. Hirudin is a potent thrombin-specific protease inhibitor. It forms a stable non-covalent complex with alpha-thrombin, thereby abolishing its ability to cleave fibrinogen. The sequence is that of Hirudin-P6 from Hirudinaria manillensis (Asian medical leech).